Reading from the N-terminus, the 670-residue chain is DNA ligase (670 aa).

Residues 32 to 36 (DSEYD), 81 to 82 (SL), and glutamate 114 each bind NAD(+). Lysine 116 acts as the N6-AMP-lysine intermediate in catalysis. Arginine 137, glutamate 174, lysine 291, and lysine 315 together coordinate NAD(+). Positions 409, 412, 427, and 433 each coordinate Zn(2+). In terms of domain architecture, BRCT spans 592–670 (ASENLFKDKT…EEEFLAQITR (79 aa)).

Belongs to the NAD-dependent DNA ligase family. LigA subfamily. Requires Mg(2+) as cofactor. Mn(2+) is required as a cofactor.

The enzyme catalyses NAD(+) + (deoxyribonucleotide)n-3'-hydroxyl + 5'-phospho-(deoxyribonucleotide)m = (deoxyribonucleotide)n+m + AMP + beta-nicotinamide D-nucleotide.. DNA ligase that catalyzes the formation of phosphodiester linkages between 5'-phosphoryl and 3'-hydroxyl groups in double-stranded DNA using NAD as a coenzyme and as the energy source for the reaction. It is essential for DNA replication and repair of damaged DNA. In Haemophilus influenzae (strain ATCC 51907 / DSM 11121 / KW20 / Rd), this protein is DNA ligase.